Here is a 510-residue protein sequence, read N- to C-terminus: NAD(P)H-quinone oxidoreductase subunit 2 A, chloroplastic (510 aa).

13 consecutive transmembrane segments (helical) span residues 24–44, 57–77, 99–119, 124–144, 149–169, 183–203, 227–247, 295–315, 323–343, 354–374, 395–415, 418–438, and 484–504; these read LLLFDGSLIFPECILIFGLIL, IPWLYFISSTSLVMSITALLF, IFQFLILLCSTLCIPLSVEYI, MALTEFLLFILTATLGGMFLC, LITIFVAPECFSLCSYLLSGY, YLLMGGASSSILVHGFSWLYG, PGISIALIFITVGIGFKLSPA, WHLLLEILAILSMILGNLIAI, MLAYSSIGQIGYVIIGIIVGD, YMLFYISMNLGTFACIVLFGL, ALSLALCLLSLGGLPPLAGFF, IYLFWCGWQAGLYFLVLIGLL, and MIVCVIASTIPGISMNPIITI.

It belongs to the complex I subunit 2 family. NDH is composed of at least 16 different subunits, 5 of which are encoded in the nucleus.

Its subcellular location is the plastid. It is found in the chloroplast thylakoid membrane. The enzyme catalyses a plastoquinone + NADH + (n+1) H(+)(in) = a plastoquinol + NAD(+) + n H(+)(out). It carries out the reaction a plastoquinone + NADPH + (n+1) H(+)(in) = a plastoquinol + NADP(+) + n H(+)(out). Functionally, NDH shuttles electrons from NAD(P)H:plastoquinone, via FMN and iron-sulfur (Fe-S) centers, to quinones in the photosynthetic chain and possibly in a chloroplast respiratory chain. The immediate electron acceptor for the enzyme in this species is believed to be plastoquinone. Couples the redox reaction to proton translocation, and thus conserves the redox energy in a proton gradient. The chain is NAD(P)H-quinone oxidoreductase subunit 2 A, chloroplastic from Spinacia oleracea (Spinach).